We begin with the raw amino-acid sequence, 356 residues long: MTPHDPVSVEAVPKIELHVHLEGTVEPATVLDIAARNGLALPVSTVDELSALYRVTTFSDFLRLWILTTNVLRKAEDFSQVVVDYARRAKRHGAVYIEGIFSPVERVMRGVGWAEIFDGYCEGAERAYAEHGVVVRLTPEAYRGADPELVAEMVRYAGRYRDRGVVGVGIGGDERARPTRHYAAAFAPAVDLGLGVVPHAGEFPLFPDGASGAATLRETIEALNPVRIRHGIAAAADPALVAVIRERGIVLDVCPTSNLRTGAIRDLADHPLPRLAAAGIPCTVGTDDPAVFDTDLSREFTIAARLGVEPRLLYDAGITGALCDDDVKSHLRQIGAATTWPTTTATWSTTAAGESL.

2 residues coordinate Zn(2+): His-18 and His-20. Residues Arg-73, Glu-140, and Gly-172 each contribute to the substrate site. Residue His-199 participates in Zn(2+) binding. Catalysis depends on Glu-202, which acts as the Proton donor. Position 287 (Asp-287) interacts with Zn(2+).

Belongs to the metallo-dependent hydrolases superfamily. Adenosine and AMP deaminases family. The cofactor is Zn(2+).

The catalysed reaction is 6-amino-6-deoxyfutalosine + H2O + H(+) = futalosine + NH4(+). Its pathway is quinol/quinone metabolism; menaquinone biosynthesis. In terms of biological role, catalyzes the deamination of aminodeoxyfutalosine (AFL) into futalosine (FL), a step in the biosynthesis of menaquinone (MK, vitamin K2). Is very poorly efficient on 1-(6-amino-9H-purin-9-yl)-1-deoxy-N-ethyl-beta-D-ribofuranuronamide (NECA), adenosine, 5'-methylthioadenosine, 5'-deoxyadenosine, 2'-deoxyadenosine, and AMP as substrate. The protein is Aminodeoxyfutalosine deaminase of Acidothermus cellulolyticus (strain ATCC 43068 / DSM 8971 / 11B).